The sequence spans 1843 residues: Nonribosomal peptide synthetase SIDD (1843 aa).

The segment at 1–83 (MLSIDDHGGG…QQQQQQQQRS (83 aa)) is disordered. Residues 65–81 (QQQQQQQQQQQQQQQQQ) are compositionally biased toward low complexity. The tract at residues 133 to 528 (TYSELEHLST…TEVEHHIQTC (396 aa)) is adenylation 1. Residues 628–647 (KLGATHADEGPQEEPETDAE) form a disordered region. The Carrier 1 domain maps to 641-716 (EPETDAEKKL…AMANKSTSIS (76 aa)). Residue Ser-677 is modified to O-(pantetheine 4'-phosphoryl)serine. Positions 753-1175 (VEDVYPCTPL…ALSDDDAAAL (423 aa)) are condensation 1. Residues 1289 to 1365 (SATSQRQRRL…EMAAVMECTD (77 aa)) enclose the Carrier 2 domain. Ser-1326 carries the O-(pantetheine 4'-phosphoryl)serine modification. Residues 1447-1734 (FFDGPVDLRR…LREIAENCGL (288 aa)) are condensation 2.

This sequence belongs to the NRP synthetase family. Pantetheine 4'-phosphate serves as cofactor.

It participates in siderophore biosynthesis. Its function is as follows. Nonribosomal peptide synthetase; part of the gene cluster that mediates the biosynthesis of at least 11 siderophores, including beauverichelin A, dimerumic acid (DA), Na-dimethyl coprogen (NADC), eleutherazine B, ferricrocin (FC), fusarinine A, fusarinine C (FsC), metachelin A, mevalonolactone, rhodotorulic acid (RA) and tenellin. This cocktail of siderophores for iron metabolism is essential for virulence, and more specifically for the fungal virulence in penetrating through the host cuticle. Siderophore synthesis is also involved in conidial germination under iron-deficient conditions. SIDC catalyzes the assembly of ferricrocin whereas SIDD catalyzes the assembly of fusarinine C. The polypeptide is Nonribosomal peptide synthetase SIDD (Beauveria bassiana (strain ARSEF 2860) (White muscardine disease fungus)).